We begin with the raw amino-acid sequence, 354 residues long: Gibberellin receptor GID1 (354 aa).

Residues 120 to 122 (HGG) carry the Involved in the stabilization of the negatively charged intermediate by the formation of the oxyanion hole motif. Gibberellin A3-binding positions include 122–123 (GS), Y134, S198, and D250. Residues 122-123 (GS), Y134, and S198 contribute to the gibberellin A4 site. S198 is a catalytic residue. Residue D296 is part of the active site. A gibberellin A3-binding site is contributed by G327. Residue G327 participates in gibberellin A4 binding.

It belongs to the 'GDXG' lipolytic enzyme family. In terms of assembly, interacts with the DELLA protein SLR1 in a GA-dependent manner, resulting in subsequent SLR1 degradation.

Its subcellular location is the nucleus. Its function is as follows. Functions as a soluble gibberellin (GA) receptor. GA is an essential hormone that regulates growth and development in plants. Binds with high affinity the biologically active GAs such as GA1, GA3 and GA4, but has low or no affinity for the biologically inactive GAs. Upon GA-binding, it interacts with the DELLA protein SLR1, a repressor of GA signaling. This leads to SLR1 degradation by the proteasome, allowing the GA signaling pathway. The sequence is that of Gibberellin receptor GID1 from Oryza sativa subsp. japonica (Rice).